The primary structure comprises 467 residues: Mothers against decapentaplegic homolog 2 (467 aa).

Residue Ser-2 is modified to N-acetylserine. A Phosphothreonine modification is found at Thr-8. Residues 10–176 form the MH1 domain; that stretch reads PVVKRLLGWK…YQRVETPVLP (167 aa). The residue at position 19 (Lys-19) is an N6-acetyllysine. Zn(2+)-binding residues include Cys-74, Cys-149, Cys-161, and His-166. The segment covering 207-217 has biased composition (polar residues); that stretch reads PAGIEPQSNYI. Residues 207–251 are disordered; that stretch reads PAGIEPQSNYIPETPPPGYISEDGETSDQQLNQSMDTGSPAELSP. Thr-220 is modified (phosphothreonine). The PY-motif signature appears at 221 to 225; it reads PPPGY. The span at 233 to 243 shows a compositional bias: polar residues; it reads SDQQLNQSMDT. Phosphoserine; by CAMK2 is present on Ser-240. A phosphoserine mark is found at Ser-245, Ser-250, Ser-255, Ser-458, Ser-460, and Ser-464. In terms of domain architecture, MH2 spans 274–467; the sequence is WCSIAYYELN…SPSVRCSSMS (194 aa). A phosphoserine; by TGFBR1 mark is found at Ser-465 and Ser-467.

It belongs to the dwarfin/SMAD family. As to quaternary structure, monomer; in the absence of TGF-beta. Heterodimer; in the presence of TGF-beta. Forms a heterodimer with co-SMAD, SMAD4, in the nucleus to form the transactivation complex SMAD2/SMAD4. Found in a complex with SMAD3 and TRIM33 upon addition of TGF-beta. Identified in a complex that contains at least ZNF451, SMAD2, SMAD3 and SMAD4. Interacts (via the MH2 domain) with ZFYVE9; may form trimers with the SMAD4 co-SMAD. Interacts with TAZ/WWRT1. Interacts with FOXH1. Interacts with SNW1. Interacts with CREB-binding protein (CBP) and EP300. Interacts with SNON. Interacts with ALK4/ACVR1B. Interacts with SKOR1. Interacts with SKOR2. Interacts with PRDM16. Interacts (via MH2 domain) with LEMD3. Interacts with RBPMS. Interacts with WWP1. Interacts (dephosphorylated form, via the MH1 and MH2 domains) with RANBP3 (via its C-terminal R domain); the interaction results in the export of dephosphorylated SMAD3 out of the nucleus and termination of the TGF-beta signaling. Interacts with PDPK1 (via PH domain). Interacts with DAB2; the interactions are enhanced upon TGF-beta stimulation. Interacts with USP15. Interacts with PPP5C. Interacts with LDLRAD4 (via the SMAD interaction motif). Interacts (via MH2 domain) with PMEPA1 (via the SMAD interaction motif). Interacts with ZFHX3. Interacts with ZNF451. Interacts with SMURF2 when phosphorylated on Ser-465/467. Interacts with PPM1A. Interacts with TGF-beta. Interacts with TGFBR1. Interacts with TGIF. Interacts with SMAD3 and TRIM33. Interacts with ZNF580. Interacts with NEDD4L in response to TGF-beta. Interacts with HGS. Interacts with AIP1. Interacts with WWP1. Interacts with PML. Interacts weakly with ZNF8. Interacts (when phosphorylated) with RNF111; RNF111 acts as an enhancer of the transcriptional responses by mediating ubiquitination and degradation of SMAD2 inhibitors. Interacts with YAP1 (when phosphorylated at 'Ser-112'). Interacts when phosphorylated with IPO7; the interaction facilitates translocation of SMAD2 to the nucleus. Interacts with MTMR4; negatively regulates TGF-beta signaling through SMAD2 dephosphorylation and retention in endosomes. Post-translationally, in response to TGF-beta, phosphorylated on the C-terminal SXS motif by TGF-beta and activin type 1 receptor kinases, phosphorylation declines progressively in a KMT5A-dependent manner. Phosphorylation in this motif is required for interaction with a number of proteins including SMURF2, SNON and SMAD4 in response to TGF-beta. Dephosphorylated in this motif by PPM1A leading to disruption of the SMAD2/3-SMAD4 complex, nuclear export and termination of the TGF-beta signaling. In response to decorin, the naturally occurring inhibitor of TGF-beta signaling, phosphorylated on Ser-240 by CaMK2. Phosphorylated by MAPK3 upon EGF stimulation; which increases transcriptional activity and stability, and is blocked by calmodulin. Phosphorylated by PDPK1. Acetylated on Lys-19 by coactivators in response to TGF-beta signaling, which increases transcriptional activity. In terms of processing, in response to TGF-beta, ubiquitinated by NEDD4L; which promotes its degradation. Monoubiquitinated, leading to prevent DNA-binding. Deubiquitination by USP15 alleviates inhibition and promotes activation of TGF-beta target genes. Ubiquitinated by RNF111, leading to its degradation: only SMAD2 proteins that are 'in use' are targeted by RNF111, RNF111 playing a key role in activating SMAD2 and regulating its turnover. In terms of tissue distribution, expressed in cardiomyocytes.

It localises to the cytoplasm. The protein resides in the nucleus. Functionally, receptor-regulated SMAD (R-SMAD) that is an intracellular signal transducer and transcriptional modulator activated by TGF-beta (transforming growth factor) and activin type 1 receptor kinases. Binds the TRE element in the promoter region of many genes that are regulated by TGF-beta and, on formation of the SMAD2/SMAD4 complex, activates transcription. Promotes TGFB1-mediated transcription of odontoblastic differentiation genes in dental papilla cells. Positively regulates PDPK1 kinase activity by stimulating its dissociation from the 14-3-3 protein YWHAQ which acts as a negative regulator. The sequence is that of Mothers against decapentaplegic homolog 2 (Smad2) from Rattus norvegicus (Rat).